We begin with the raw amino-acid sequence, 86 residues long: Small ribosomal subunit protein bS20 (86 aa).

The span at 1–27 (MANSKSAKKRATQAERRRQHNASRRSM) shows a compositional bias: basic residues. The segment at 1–28 (MANSKSAKKRATQAERRRQHNASRRSMM) is disordered.

Belongs to the bacterial ribosomal protein bS20 family.

Its function is as follows. Binds directly to 16S ribosomal RNA. In Aliivibrio salmonicida (strain LFI1238) (Vibrio salmonicida (strain LFI1238)), this protein is Small ribosomal subunit protein bS20.